The sequence spans 172 residues: Ribosome maturation factor RimM (172 aa).

One can recognise a PRC barrel domain in the interval 95 to 168 (DDGEFYYHEI…RVDVEILEGL (74 aa)).

Belongs to the RimM family. In terms of assembly, binds ribosomal protein uS19.

The protein resides in the cytoplasm. Functionally, an accessory protein needed during the final step in the assembly of 30S ribosomal subunit, possibly for assembly of the head region. Essential for efficient processing of 16S rRNA. May be needed both before and after RbfA during the maturation of 16S rRNA. It has affinity for free ribosomal 30S subunits but not for 70S ribosomes. This chain is Ribosome maturation factor RimM, found in Streptococcus pneumoniae (strain P1031).